Consider the following 199-residue polypeptide: Imidazole glycerol phosphate synthase subunit HisH 2 (199 aa).

In terms of domain architecture, Glutamine amidotransferase type-1 spans 1 to 199 (MIAVIDVSGN…NNFLSLESTC (199 aa)). The active-site Nucleophile is the cysteine 76. Catalysis depends on residues histidine 177 and glutamate 179.

In terms of assembly, heterodimer of HisH and HisF.

It localises to the cytoplasm. It catalyses the reaction 5-[(5-phospho-1-deoxy-D-ribulos-1-ylimino)methylamino]-1-(5-phospho-beta-D-ribosyl)imidazole-4-carboxamide + L-glutamine = D-erythro-1-(imidazol-4-yl)glycerol 3-phosphate + 5-amino-1-(5-phospho-beta-D-ribosyl)imidazole-4-carboxamide + L-glutamate + H(+). The enzyme catalyses L-glutamine + H2O = L-glutamate + NH4(+). Its pathway is amino-acid biosynthesis; L-histidine biosynthesis; L-histidine from 5-phospho-alpha-D-ribose 1-diphosphate: step 5/9. In terms of biological role, IGPS catalyzes the conversion of PRFAR and glutamine to IGP, AICAR and glutamate. The HisH subunit provides the glutamine amidotransferase activity that produces the ammonia necessary to HisF for the synthesis of IGP and AICAR. The chain is Imidazole glycerol phosphate synthase subunit HisH 2 from Legionella pneumophila subsp. pneumophila (strain Philadelphia 1 / ATCC 33152 / DSM 7513).